The primary structure comprises 262 residues: Hydroxyethylthiazole kinase (262 aa).

Met41 is a substrate binding site. Positions 117 and 163 each coordinate ATP. Gly190 contacts substrate.

The protein belongs to the Thz kinase family. Mg(2+) serves as cofactor.

It catalyses the reaction 5-(2-hydroxyethyl)-4-methylthiazole + ATP = 4-methyl-5-(2-phosphooxyethyl)-thiazole + ADP + H(+). The protein operates within cofactor biosynthesis; thiamine diphosphate biosynthesis; 4-methyl-5-(2-phosphoethyl)-thiazole from 5-(2-hydroxyethyl)-4-methylthiazole: step 1/1. Functionally, catalyzes the phosphorylation of the hydroxyl group of 4-methyl-5-beta-hydroxyethylthiazole (THZ). This chain is Hydroxyethylthiazole kinase, found in Levilactobacillus brevis (strain ATCC 367 / BCRC 12310 / CIP 105137 / JCM 1170 / LMG 11437 / NCIMB 947 / NCTC 947) (Lactobacillus brevis).